Reading from the N-terminus, the 536-residue chain is Phosphoenolpyruvate carboxykinase (ATP) (536 aa).

The substrate site is built by Arg61, Tyr195, and Lys201. ATP contacts are provided by residues Lys201, His220, and 236–244 (GLSGTGKTT). Residues Lys201 and His220 each coordinate Mn(2+). Residue Asp257 participates in Mn(2+) binding. Residues Glu285, Arg322, and Thr447 each contribute to the ATP site. Arg322 provides a ligand contact to substrate.

This sequence belongs to the phosphoenolpyruvate carboxykinase (ATP) family. Requires Mn(2+) as cofactor.

The protein localises to the cytoplasm. The enzyme catalyses oxaloacetate + ATP = phosphoenolpyruvate + ADP + CO2. It functions in the pathway carbohydrate biosynthesis; gluconeogenesis. Functionally, involved in the gluconeogenesis. Catalyzes the conversion of oxaloacetate (OAA) to phosphoenolpyruvate (PEP) through direct phosphoryl transfer between the nucleoside triphosphate and OAA. In Rhizobium etli (strain CIAT 652), this protein is Phosphoenolpyruvate carboxykinase (ATP).